Reading from the N-terminus, the 485-residue chain is ATP-dependent 6-phosphofructokinase (485 aa).

ATP contacts are provided by residues Gly105, 171–172, and 196–199; these read RG and GDGT. Asp197 contributes to the Mg(2+) binding site. Residues 225-227, 270-272, Glu323, and 378-381 contribute to the substrate site; these read TID, MGR, and YMIR. Catalysis depends on Asp227, which acts as the Proton acceptor. Positions 483–485 match the Peroxisomal targeting signal motif; that stretch reads SKL.

This sequence belongs to the phosphofructokinase type A (PFKA) family. PPi-dependent PFK group II subfamily. Atypical ATP-dependent clade 'X' sub-subfamily. Homotetramer. It depends on Mg(2+) as a cofactor.

It is found in the glycosome. The enzyme catalyses beta-D-fructose 6-phosphate + ATP = beta-D-fructose 1,6-bisphosphate + ADP + H(+). The protein operates within carbohydrate degradation; glycolysis; D-glyceraldehyde 3-phosphate and glycerone phosphate from D-glucose: step 3/4. Its activity is regulated as follows. Allosterically activated by AMP. Catalyzes the phosphorylation of D-fructose 6-phosphate to fructose 1,6-bisphosphate by ATP, the first committing step of glycolysis. The chain is ATP-dependent 6-phosphofructokinase from Trypanosoma cruzi (strain CL Brener).